Here is a 546-residue protein sequence, read N- to C-terminus: Glutamate--tRNA ligase (546 aa).

The short motif at 41–51 is the 'HIGH' region element; the sequence is PSPTGFQHIGG. Positions 293-297 match the 'KMSKS' region motif; that stretch reads KLSKR. K296 provides a ligand contact to ATP.

It belongs to the class-I aminoacyl-tRNA synthetase family. Glutamate--tRNA ligase type 1 subfamily. As to quaternary structure, monomer.

The protein localises to the cytoplasm. It catalyses the reaction tRNA(Glu) + L-glutamate + ATP = L-glutamyl-tRNA(Glu) + AMP + diphosphate. In terms of biological role, catalyzes the attachment of glutamate to tRNA(Glu) in a two-step reaction: glutamate is first activated by ATP to form Glu-AMP and then transferred to the acceptor end of tRNA(Glu). This chain is Glutamate--tRNA ligase, found in Clostridium perfringens (strain 13 / Type A).